Consider the following 178-residue polypeptide: MASISSTVATVSRAAPAQANMVAPFTGLKSNAAFPATKKANDFSTLPSNGGRVQCMKVWPPLGKKKYETLSYLPNLTEAQLAKEVDYLLRNKWVPCLEFELEHGFVYRENARSPGYYDGRYWTMWKLPMFGCTDSAQVMKELQECKKEYPQAWIRIIGFDNVRQVQCISFIASKPDGF.

The transit peptide at 1-54 directs the protein to the chloroplast; sequence MASISSTVATVSRAAPAQANMVAPFTGLKSNAAFPATKKANDFSTLPSNGGRVQ.

It belongs to the RuBisCO small chain family. In terms of assembly, heterohexadecamer of 8 large and 8 small subunits.

It localises to the plastid. The protein resides in the chloroplast. Its function is as follows. RuBisCO catalyzes two reactions: the carboxylation of D-ribulose 1,5-bisphosphate, the primary event in carbon dioxide fixation, as well as the oxidative fragmentation of the pentose substrate. Both reactions occur simultaneously and in competition at the same active site. Although the small subunit is not catalytic it is essential for maximal activity. This chain is Ribulose bisphosphate carboxylase small subunit, chloroplastic 4, found in Flaveria pringlei.